The primary structure comprises 654 residues: Potassium voltage-gated channel subfamily A member 4 (654 aa).

The Cytoplasmic portion of the chain corresponds to 1–305; the sequence is MEVAMVSAES…LLFEYPESSS (305 aa). The segment at 24–145 is disordered; it reads QARARERERL…EEGRFYYSEE (122 aa). Over residues 36 to 50 the composition is skewed to low complexity; sequence SRAAAAAAVAAATAA. A compositionally biased stretch (basic residues) spans 81–99; the sequence is GSRRRRRQRTEKKKLHHRQ. Serine 122 carries the post-translational modification Phosphoserine. Residues 122–137 are compositionally biased toward acidic residues; that stretch reads SEEEEDEEEEEEEEEE. A helical membrane pass occupies residues 306–327; the sequence is PARGIAIVSVLVILISIVIFCL. Over 328-371 the chain is Extracellular; the sequence is ETLPEFRDDRDLIMALSAGGHSRLLNDTSAPHLENSGHTIFNDP. An N-linked (GlcNAc...) asparagine glycan is attached at asparagine 353. The chain crosses the membrane as a helical span at residues 372 to 393; the sequence is FFIVETVCIVWFSFEFVVRCFA. Residues 394 to 404 lie on the Cytoplasmic side of the membrane; that stretch reads CPSQALFFKNI. The helical transmembrane segment at 405-425 threads the bilayer; sequence MNIIDIVSILPYFITLGTDLA. At 426 to 440 the chain is on the extracellular side; sequence QQQGGGNGQQQQAMS. Residues 441-461 traverse the membrane as a helical; Voltage-sensor segment; it reads FAILRIIRLVRVFRIFKLSRH. The Cytoplasmic segment spans residues 462-476; the sequence is SKGLQILGHTLRASM. The segment at 463-476 is S4-S5 linker; the sequence is KGLQILGHTLRASM. The chain crosses the membrane as a helical span at residues 477–498; that stretch reads RELGLLIFFLFIGVILFSSAVY. At 499–512 the chain is on the extracellular side; sequence FAEADEPTTHFQSI. Positions 513-524 form an intramembrane region, helical; the sequence is PDAFWWAVVTMT. Positions 525 to 530 match the Selectivity filter motif; that stretch reads TVGYGD. The stretch at 525-532 is an intramembrane region; it reads TVGYGDMK. The Extracellular portion of the chain corresponds to 533–539; the sequence is PITVGGK. The helical transmembrane segment at 540–568 threads the bilayer; the sequence is IVGSLCAIAGVLTIALPVPVIVSNFNYFY. Over 569–654 the chain is Cytoplasmic; the sequence is HRETENEEQT…SNAKAVETDV (86 aa). At serine 600 the chain carries Phosphoserine; by PKA. Positions 630-641 are enriched in basic and acidic residues; the sequence is CQGKGDESETDK. The disordered stretch occupies residues 630–654; it reads CQGKGDESETDKNNCSNAKAVETDV. The PDZ-binding signature appears at 652-654; sequence TDV.

It belongs to the potassium channel family. A (Shaker) (TC 1.A.1.2) subfamily. Kv1.4/KCNA4 sub-subfamily. In terms of assembly, homotetramer and heterotetramer of potassium channel proteins. Interacts with KCNAB1 and KCNAB2. Interacts with DLG1, DLG2 and DLG4 via their PDZ domains. Interacts with SIGMAR1. Detected in a complex with KCNA1. Interacts with KCNA2. Part of a complex containing KCNA1, KCNAB1 and LGI1. Interacts (via cytoplasmic N-terminal domain) with KCNRG. Expressed in the brain, lens and retina.

It localises to the cell membrane. It is found in the cell projection. The protein resides in the axon. The catalysed reaction is K(+)(in) = K(+)(out). Functionally, voltage-gated potassium channel that mediates transmembrane potassium transport in excitable membranes. Forms tetrameric potassium-selective channels through which potassium ions pass in accordance with their electrochemical gradient. The channel alternates between opened and closed conformations in response to the voltage difference across the membrane. Can form functional homotetrameric channels and heterotetrameric channels that contain variable proportions of KCNA1, KCNA2, KCNA4, KCNA5, and possibly other family members as well; channel properties depend on the type of alpha subunits that are part of the channel. Channel properties are modulated by cytoplasmic beta subunits that regulate the subcellular location of the alpha subunits and promote rapid inactivation. In vivo, membranes probably contain a mixture of heteromeric potassium channel complexes, making it difficult to assign currents observed in intact tissues to any particular potassium channel family member. Homotetrameric KCNA4 forms a potassium channel that opens in response to membrane depolarization, followed by rapid spontaneous channel closure. Likewise, a heterotetrameric channel formed by KCNA1 and KCNA4 shows rapid inactivation. The sequence is that of Potassium voltage-gated channel subfamily A member 4 (Kcna4) from Mus musculus (Mouse).